The chain runs to 564 residues: Multidrug resistance protein 1 (564 aa).

The Cytoplasmic portion of the chain corresponds to M1 to K115. The segment at I60 to D101 is disordered. Residues N67–D86 show a composition bias toward low complexity. The chain crosses the membrane as a helical span at residues A116–Y136. Residues T137–R151 are Extracellular-facing. The helical transmembrane segment at V152–F172 threads the bilayer. The Cytoplasmic portion of the chain corresponds to S173–R183. The chain crosses the membrane as a helical span at residues T184–V204. Over N205–N206 the chain is Extracellular. Residues I207–T227 traverse the membrane as a helical segment. Residues G228–P242 lie on the Cytoplasmic side of the membrane. A helical membrane pass occupies residues V243–G263. The Extracellular segment spans residues S264–R273. A helical transmembrane segment spans residues W274 to L294. Residues P295 to E350 are Cytoplasmic-facing. A helical transmembrane segment spans residues P351 to F371. The Extracellular segment spans residues E372 to G390. Residues T391–I411 form a helical membrane-spanning segment. The Cytoplasmic portion of the chain corresponds to R412 to E428. A helical transmembrane segment spans residues V429–G449. Over W450 to T455 the chain is Extracellular. N453 carries an N-linked (GlcNAc...) asparagine glycan. A helical membrane pass occupies residues T456–F476. Residues Q477–R503 lie on the Cytoplasmic side of the membrane. The helical transmembrane segment at S504–P524 threads the bilayer. Residues E525–V528 lie on the Extracellular side of the membrane. A helical membrane pass occupies residues A529 to F549. Over Y550–N564 the chain is Cytoplasmic.

The protein belongs to the major facilitator superfamily. CAR1 family.

Its subcellular location is the cell membrane. Functionally, plasma membrane multidrug efflux pump that confers resistance to numerous chemicals including azoles such as fluconazole, voriconazole, and benztriazoles, as well as to benomyl, cycloheximide, methotrexate, 4-nitroquinoline-N-oxide, sulfometuron methyl, cerulenin, and brefeldin A. The polypeptide is Multidrug resistance protein 1 (Candida albicans (strain SC5314 / ATCC MYA-2876) (Yeast)).